We begin with the raw amino-acid sequence, 124 residues long: Small ribosomal subunit protein uS12 (124 aa).

Residues 1 to 25 (MATINQLVRKPRQATTYKSASPALD) are disordered. Asp89 carries the post-translational modification 3-methylthioaspartic acid.

The protein belongs to the universal ribosomal protein uS12 family. As to quaternary structure, part of the 30S ribosomal subunit. Contacts proteins S8 and S17. May interact with IF1 in the 30S initiation complex.

With S4 and S5 plays an important role in translational accuracy. Functionally, interacts with and stabilizes bases of the 16S rRNA that are involved in tRNA selection in the A site and with the mRNA backbone. Located at the interface of the 30S and 50S subunits, it traverses the body of the 30S subunit contacting proteins on the other side and probably holding the rRNA structure together. The combined cluster of proteins S8, S12 and S17 appears to hold together the shoulder and platform of the 30S subunit. This Xanthomonas campestris pv. campestris (strain 8004) protein is Small ribosomal subunit protein uS12.